We begin with the raw amino-acid sequence, 226 residues long: Large ribosomal subunit protein uL1 (226 aa).

It belongs to the universal ribosomal protein uL1 family. As to quaternary structure, part of the 50S ribosomal subunit.

Binds directly to 23S rRNA. The L1 stalk is quite mobile in the ribosome, and is involved in E site tRNA release. Functionally, protein L1 is also a translational repressor protein, it controls the translation of the L11 operon by binding to its mRNA. This is Large ribosomal subunit protein uL1 from Borreliella burgdorferi (strain ATCC 35210 / DSM 4680 / CIP 102532 / B31) (Borrelia burgdorferi).